The sequence spans 479 residues: Poly(A) polymerase catalytic subunit (479 aa).

Catalysis depends on residues D202 and D204. 3 residues coordinate Ca(2+): D202, D204, and D253.

It belongs to the poxviridae poly(A) polymerase catalytic subunit family. Heterodimer of a large (catalytic) subunit and a small (regulatory) subunit.

It carries out the reaction RNA(n) + ATP = RNA(n)-3'-adenine ribonucleotide + diphosphate. In terms of biological role, polymerase that creates the 3'-poly(A) tail of mRNA's. This chain is Poly(A) polymerase catalytic subunit (OPG063), found in Homo sapiens (Human).